Here is a 267-residue protein sequence, read N- to C-terminus: Thymidylate synthase (267 aa).

Arg-24 is a binding site for dUMP. His-54 is a binding site for (6R)-5,10-methylene-5,6,7,8-tetrahydrofolate. 129–130 contributes to the dUMP binding site; the sequence is RR. Cys-149 serves as the catalytic Nucleophile. Residues 169 to 172, Asn-180, and 210 to 212 each bind dUMP; these read RSAD and HVY. Position 172 (Asp-172) interacts with (6R)-5,10-methylene-5,6,7,8-tetrahydrofolate. Ala-266 contacts (6R)-5,10-methylene-5,6,7,8-tetrahydrofolate.

Belongs to the thymidylate synthase family. Bacterial-type ThyA subfamily. Homodimer.

The protein localises to the cytoplasm. The catalysed reaction is dUMP + (6R)-5,10-methylene-5,6,7,8-tetrahydrofolate = 7,8-dihydrofolate + dTMP. The protein operates within pyrimidine metabolism; dTTP biosynthesis. Its function is as follows. Catalyzes the reductive methylation of 2'-deoxyuridine-5'-monophosphate (dUMP) to 2'-deoxythymidine-5'-monophosphate (dTMP) while utilizing 5,10-methylenetetrahydrofolate (mTHF) as the methyl donor and reductant in the reaction, yielding dihydrofolate (DHF) as a by-product. This enzymatic reaction provides an intracellular de novo source of dTMP, an essential precursor for DNA biosynthesis. This Paenarthrobacter aurescens (strain TC1) protein is Thymidylate synthase.